A 464-amino-acid polypeptide reads, in one-letter code: tRNA modification GTPase MnmE (464 aa).

3 residues coordinate (6S)-5-formyl-5,6,7,8-tetrahydrofolate: arginine 27, glutamate 89, and arginine 128. The TrmE-type G domain occupies glycine 225–phenylalanine 384. Asparagine 235 contributes to the K(+) binding site. Residues asparagine 235 to serine 240, threonine 254 to threonine 260, and aspartate 279 to glycine 282 contribute to the GTP site. Serine 239 lines the Mg(2+) pocket. Residues threonine 254, valine 256, and threonine 259 each contribute to the K(+) site. Mg(2+) is bound at residue threonine 260. Lysine 464 lines the (6S)-5-formyl-5,6,7,8-tetrahydrofolate pocket.

Belongs to the TRAFAC class TrmE-Era-EngA-EngB-Septin-like GTPase superfamily. TrmE GTPase family. Homodimer. Heterotetramer of two MnmE and two MnmG subunits. K(+) serves as cofactor.

It is found in the cytoplasm. Functionally, exhibits a very high intrinsic GTPase hydrolysis rate. Involved in the addition of a carboxymethylaminomethyl (cmnm) group at the wobble position (U34) of certain tRNAs, forming tRNA-cmnm(5)s(2)U34. This chain is tRNA modification GTPase MnmE, found in Levilactobacillus brevis (strain ATCC 367 / BCRC 12310 / CIP 105137 / JCM 1170 / LMG 11437 / NCIMB 947 / NCTC 947) (Lactobacillus brevis).